We begin with the raw amino-acid sequence, 796 residues long: Kinesin-like protein KIF3C (796 aa).

The Kinesin motor domain maps to Ala-10–Ile-367. Gly-97–Thr-104 lines the ATP pocket. Disordered stretches follow at residues Glu-251–Ala-292, Glu-397–Ala-421, and Pro-754–Asp-796. Residues Ala-270 to Ser-284 are compositionally biased toward gly residues. Residues Lys-378–Lys-632 are a coiled coil. The segment covering Met-401–Ala-416 has biased composition (basic residues). The segment at Tyr-633–Val-793 is globular.

This sequence belongs to the TRAFAC class myosin-kinesin ATPase superfamily. Kinesin family. Kinesin II subfamily. In terms of assembly, heterodimer of KIF3A and KIF3C.

It is found in the cytoplasm. The protein resides in the cytoskeleton. In terms of biological role, microtubule-based anterograde translocator for membranous organelles. In Rattus norvegicus (Rat), this protein is Kinesin-like protein KIF3C (Kif3c).